A 60-amino-acid polypeptide reads, in one-letter code: Histidine-rich metal-binding polypeptide (60 aa).

The interval 1 to 60 (MAHHEEQHGGHHHHHHHTHHHHYHGGEHHHHHHSSHHEEGCCSTSDSHHQEEGCCHGHHE) is disordered. Residues 10–35 (GHHHHHHHTHHHHYHGGEHHHHHHSS) show a composition bias toward basic residues. Residues 36 to 60 (HHEEGCCSTSDSHHQEEGCCHGHHE) show a composition bias toward basic and acidic residues. Repeat copies occupy residues 38–42 (EEGCC) and 51–55 (EEGCC). The tract at residues 38 to 55 (EEGCCSTSDSHHQEEGCC) is 2 X 5 AA repeats of E-E-G-C-C.

Functionally, strongly binds nickel and zinc. Binds other metals less strongly: cobalt &gt; copper &gt; cadmium &gt; manganese. May act to increase, or at least to preserve, urease activity. Exact function is still unknown. The sequence is that of Histidine-rich metal-binding polypeptide (hpn) from Helicobacter pylori (strain J99 / ATCC 700824) (Campylobacter pylori J99).